The primary structure comprises 147 residues: uncharacterized protein (147 aa).

The helical transmembrane segment at 13–35 threads the bilayer; sequence NSRINLLGILVLNVVCGKSSIFF.

It is found in the membrane. This is an uncharacterized protein from Saccharomyces cerevisiae (strain ATCC 204508 / S288c) (Baker's yeast).